The sequence spans 426 residues: 3-phosphoshikimate 1-carboxyvinyltransferase (426 aa).

Residues Lys22, Ser23, and Arg27 each contribute to the 3-phosphoshikimate site. Lys22 lines the phosphoenolpyruvate pocket. Residues Gly96 and Arg124 each coordinate phosphoenolpyruvate. Residues Ser170, Ser171, Gln172, Ser198, Asp314, Asn337, and Lys341 each contribute to the 3-phosphoshikimate site. Phosphoenolpyruvate is bound at residue Gln172. The Proton acceptor role is filled by Asp314. The phosphoenolpyruvate site is built by Arg345, Arg387, and Lys412.

Belongs to the EPSP synthase family. Monomer.

The protein localises to the cytoplasm. The enzyme catalyses 3-phosphoshikimate + phosphoenolpyruvate = 5-O-(1-carboxyvinyl)-3-phosphoshikimate + phosphate. It participates in metabolic intermediate biosynthesis; chorismate biosynthesis; chorismate from D-erythrose 4-phosphate and phosphoenolpyruvate: step 6/7. Functionally, catalyzes the transfer of the enolpyruvyl moiety of phosphoenolpyruvate (PEP) to the 5-hydroxyl of shikimate-3-phosphate (S3P) to produce enolpyruvyl shikimate-3-phosphate and inorganic phosphate. In Shewanella halifaxensis (strain HAW-EB4), this protein is 3-phosphoshikimate 1-carboxyvinyltransferase.